We begin with the raw amino-acid sequence, 426 residues long: 26S proteasome regulatory subunit 7 homolog A (426 aa).

209–216 (GPPGTGKT) is an ATP binding site. Residues Lys-400 and Lys-415 each participate in a glycyl lysine isopeptide (Lys-Gly) (interchain with G-Cter in ubiquitin) cross-link.

The protein belongs to the AAA ATPase family. In terms of assembly, component of the 19S regulatory particle (RP/PA700) base subcomplex of the 26S proteasome. The 26S proteasome is composed of a core protease (CP), known as the 20S proteasome, capped at one or both ends by the 19S regulatory particle (RP/PA700). The RP/PA700 complex is composed of at least 17 different subunits in two subcomplexes, the base and the lid, which form the portions proximal and distal to the 20S proteolytic core, respectively.

The protein resides in the cytoplasm. The protein localises to the nucleus. Functionally, the 26S proteasome is involved in the ATP-dependent degradation of ubiquitinated proteins. The regulatory (or ATPase) complex confers ATP dependency and substrate specificity to the 26S complex. This Arabidopsis thaliana (Mouse-ear cress) protein is 26S proteasome regulatory subunit 7 homolog A (RPT1A).